Reading from the N-terminus, the 741-residue chain is MLKLFSAFRKNKIWDFNGGIHPPEMKTQSNGTPLRQVPLAQRFVIPLKQHIGAEGELCVSVGDKVLRGQPLTRGRGKMLPVHAPTSGTVTAIAPHSTSHPSALAELSVIIDADGEDCWIPRDGWADYRSRSREELIERIHQFGVAGLGGAGFPTGVKLQGGGDKIETLIINAAECEPYITADDRLMQDCAAQVVEGIRILAHILQPREILIGIEDNKPQAISMLRAVLADSHDISLRVIPTKYPSGGAKQLTYILTGKQVPHGGRSSDIGVLMQNVGTAYAVKRAVIDGEPITERVVTLTGEAIARPGNVWARLGTPVRHLLNDAGFCPSADQMVIMGGPLMGFTLPWLDVPVVKITNCLLAPSANELGEPQEEQSCIRCSACADACPADLLPQQLYWFSKGQQHDKATTHNIADCIECGACAWVCPSNIPLVQYFRQEKAEIAAIRQEEKRAAEAKARFEARQARLEREKAARLERHKSAAVQPAAKDKDAIAAALARVKEKQAQATQPIVIKAGERPDNSAIIAAREARKAQARAKQAELQQTNDAATVADPRKTAVEAAIARAKARKLEQQQANAEPEQQVDPRKAAVEAAIARAKARKLEQQQANAEPEEQIDPRKAAVEAAIARAKARKLEQQQQANAEPEEQVDPRKAAVEAAIARAKARKLEQQQANAEPEEQIDPRKAAVEAAIARAKARKLEQQQANAEPEEQIDPRKAAVAAAIARVQAKKAAQQKVVNED.

2 4Fe-4S ferredoxin-type domains span residues Gly369 to Tyr397 and Lys407 to Phe436. The [4Fe-4S] cluster site is built by Cys377, Cys380, Cys383, Cys387, Cys416, Cys419, Cys422, and Cys426. The disordered stretch occupies residues Ile627 to Ala654.

It belongs to the 4Fe4S bacterial-type ferredoxin family. RnfC subfamily. As to quaternary structure, the complex is composed of six subunits: RsxA, RsxB, RsxC, RsxD, RsxE and RsxG. The cofactor is [4Fe-4S] cluster.

The protein localises to the cell inner membrane. Its function is as follows. Part of a membrane-bound complex that couples electron transfer with translocation of ions across the membrane. Required to maintain the reduced state of SoxR. In Escherichia coli O127:H6 (strain E2348/69 / EPEC), this protein is Ion-translocating oxidoreductase complex subunit C.